The sequence spans 617 residues: Threonine--tRNA ligase (617 aa).

The tract at residues 209 to 502 (DHRRLGKDLD…MTENYAGDFP (294 aa)) is catalytic. 3 residues coordinate Zn(2+): Cys-302, His-353, and His-479.

Belongs to the class-II aminoacyl-tRNA synthetase family. Homodimer. The cofactor is Zn(2+).

The protein localises to the cytoplasm. It catalyses the reaction tRNA(Thr) + L-threonine + ATP = L-threonyl-tRNA(Thr) + AMP + diphosphate + H(+). Catalyzes the attachment of threonine to tRNA(Thr) in a two-step reaction: L-threonine is first activated by ATP to form Thr-AMP and then transferred to the acceptor end of tRNA(Thr). Also edits incorrectly charged L-seryl-tRNA(Thr). The protein is Threonine--tRNA ligase of Synechococcus sp. (strain CC9311).